A 452-amino-acid polypeptide reads, in one-letter code: Exodeoxyribonuclease 7 large subunit (452 aa).

Belongs to the XseA family. Heterooligomer composed of large and small subunits.

It is found in the cytoplasm. The catalysed reaction is Exonucleolytic cleavage in either 5'- to 3'- or 3'- to 5'-direction to yield nucleoside 5'-phosphates.. In terms of biological role, bidirectionally degrades single-stranded DNA into large acid-insoluble oligonucleotides, which are then degraded further into small acid-soluble oligonucleotides. This Lysinibacillus sphaericus (strain C3-41) protein is Exodeoxyribonuclease 7 large subunit.